Here is a 263-residue protein sequence, read N- to C-terminus: 3-methyl-2-oxobutanoate hydroxymethyltransferase (263 aa).

Mg(2+)-binding residues include Asp-45 and Asp-84. 3-methyl-2-oxobutanoate-binding positions include 45 to 46 (DS), Asp-84, and Lys-112. Glu-114 contacts Mg(2+). The Proton acceptor role is filled by Glu-181.

This sequence belongs to the PanB family. As to quaternary structure, homodecamer; pentamer of dimers. Mg(2+) is required as a cofactor.

It localises to the cytoplasm. The enzyme catalyses 3-methyl-2-oxobutanoate + (6R)-5,10-methylene-5,6,7,8-tetrahydrofolate + H2O = 2-dehydropantoate + (6S)-5,6,7,8-tetrahydrofolate. The protein operates within cofactor biosynthesis; (R)-pantothenate biosynthesis; (R)-pantoate from 3-methyl-2-oxobutanoate: step 1/2. In terms of biological role, catalyzes the reversible reaction in which hydroxymethyl group from 5,10-methylenetetrahydrofolate is transferred onto alpha-ketoisovalerate to form ketopantoate. This chain is 3-methyl-2-oxobutanoate hydroxymethyltransferase, found in Buchnera aphidicola subsp. Schizaphis graminum (strain Sg).